We begin with the raw amino-acid sequence, 531 residues long: Arginine--tRNA ligase (531 aa).

Positions 113–123 (ANPTGPLHIGH) match the 'HIGH' region motif.

This sequence belongs to the class-I aminoacyl-tRNA synthetase family. In terms of assembly, monomer.

Its subcellular location is the cytoplasm. The enzyme catalyses tRNA(Arg) + L-arginine + ATP = L-arginyl-tRNA(Arg) + AMP + diphosphate. The polypeptide is Arginine--tRNA ligase (Campylobacter fetus subsp. fetus (strain 82-40)).